Here is a 102-residue protein sequence, read N- to C-terminus: Small ribosomal subunit protein uS10 (102 aa).

This sequence belongs to the universal ribosomal protein uS10 family. In terms of assembly, part of the 30S ribosomal subunit.

In terms of biological role, involved in the binding of tRNA to the ribosomes. The sequence is that of Small ribosomal subunit protein uS10 from Streptococcus equi subsp. zooepidemicus (strain MGCS10565).